The chain runs to 1246 residues: Respiratory nitrate reductase 2 alpha chain (1246 aa).

The 4Fe-4S Mo/W bis-MGD-type domain occupies 43-107 (DKIVRSTHGV…SYSWYLYSAN (65 aa)). Residues His50, Cys54, Cys58, and Cys93 each contribute to the [4Fe-4S] cluster site. Mo-bis(molybdopterin guanine dinucleotide) is bound at residue Asp223.

This sequence belongs to the prokaryotic molybdopterin-containing oxidoreductase family. In terms of assembly, tetramer composed of an alpha, a beta and 2 gamma chains. Alpha and beta are catalytic chains; gamma chain is involved in binding the enzyme complex to the cytoplasmic membrane. [4Fe-4S] cluster is required as a cofactor. Mo-bis(molybdopterin guanine dinucleotide) serves as cofactor.

Its subcellular location is the cell membrane. It carries out the reaction nitrate + a quinol = a quinone + nitrite + H2O. In terms of biological role, this is a second nitrate reductase enzyme which can substitute for the NRA enzyme and allows E.coli to use nitrate as an electron acceptor during anaerobic growth. The alpha chain is the actual site of nitrate reduction. The polypeptide is Respiratory nitrate reductase 2 alpha chain (narZ) (Escherichia coli (strain K12)).